Here is a 161-residue protein sequence, read N- to C-terminus: Large ribosomal subunit protein uL15 (161 aa).

A disordered region spans residues 1–47 (MKLHELHDNPGANRKKKRVARGPGSGKGKTAGRGIKGQTSRSGVALN). Positions 23-35 (PGSGKGKTAGRGI) are enriched in gly residues.

It belongs to the universal ribosomal protein uL15 family. In terms of assembly, part of the 50S ribosomal subunit.

Functionally, binds to the 23S rRNA. The protein is Large ribosomal subunit protein uL15 of Paracoccus denitrificans (strain Pd 1222).